Here is a 1516-residue protein sequence, read N- to C-terminus: Receptor-type tyrosine-protein phosphatase S (1516 aa).

The first 28 residues, 1–28 (MRILPSPGMPALLSLVSLLSVLLMGCVA), serve as a signal peptide directing secretion. Residues 29–854 (ESPPVFIKKP…PQPIIDGEEG (826 aa)) lie on the Extracellular side of the membrane. Ig-like C2-type domains are found at residues 32-122 (PVFI…AKLT), 134-223 (PNID…ANLY), and 235-317 (PRFS…AQIT). Disulfide bonds link Cys53–Cys106 and Cys155–Cys206. Residues 67–71 (KKGKK) are important for binding to glycosaminoglycan chains. Residues Asn253 and Asn298 are each glycosylated (N-linked (GlcNAc...) asparagine). Cys256 and Cys301 are joined by a disulfide. 4 consecutive Fibronectin type-III domains span residues 324 to 414 (APGT…TGEQ), 419 to 513 (APRN…TQQG), 517 to 606 (QPMN…TLQS), and 608 to 692 (LPKN…TAAN). A helical membrane pass occupies residues 855-875 (LIWVIGPVLAVVFIICIVIAI). The Cytoplasmic segment spans residues 876-1516 (LLYKNKRKDS…YLGSFDHYAT (641 aa)). Tyrosine-protein phosphatase domains are found at residues 961-1216 (LSQE…LLEA) and 1248-1507 (MELE…ALEY). Active-site phosphocysteine intermediate residues include Cys1157 and Cys1448.

The protein belongs to the protein-tyrosine phosphatase family. Receptor class 2A subfamily. As to quaternary structure, homodimer. Binding to large heparan sulfate proteoglycan structures promotes oligomerization. Binding to chondroitin sulfate proteoglycan does not lead to oligomerization. Interacts (via Ig-like domains) with NTRK1 and NTRK3, but does not form detectable complexes with NTRK2. Interacts (via extracellular domain) with the heparan sulfate proteoglycans AGRN and COL18A1. In terms of processing, a cleavage occurs, separating the extracellular domain from the transmembrane segment. This process called 'ectodomain shedding' is thought to be involved in receptor desensitization, signal transduction and/or membrane localization. In terms of tissue distribution, detected in embryonic brain, dorsal root ganglion and spinal cord. Detected in embryonic retina (at protein level). Detected in embryonic brain, spinal cord, dorsal root ganglion, trigeminal ganglion, ganglia associated with the precardinal vein and vagus nerve, the inner and outer nuclear layer of the retina, limb, breast muscle, heart, gut and lung.

It localises to the cell membrane. The protein resides in the cell projection. Its subcellular location is the axon. The protein localises to the perikaryon. It is found in the cytoplasmic vesicle. It localises to the secretory vesicle. The protein resides in the synaptic vesicle membrane. Its subcellular location is the synapse. The protein localises to the synaptosome. It is found in the postsynaptic density. It localises to the neuron projection. The protein resides in the growth cone. The enzyme catalyses O-phospho-L-tyrosyl-[protein] + H2O = L-tyrosyl-[protein] + phosphate. In terms of biological role, cell surface receptor that binds to glycosaminoglycans, including chondroitin sulfate proteoglycans and heparan sulfate proteoglycans. Binding to chondroitin sulfate and heparan sulfate proteoglycans has opposite effects on PTPRS oligomerization and regulation of neurite outgrowth. Contributes to the inhibition of neurite and axonal outgrowth by chondroitin sulfate proteoglycans, also after nerve transection. Plays a role in stimulating neurite outgrowth in response to the heparan sulfate proteoglycan GPC2. Required for normal brain development, especially for normal development of the pituitary gland and the olfactory bulb. Functions as tyrosine phosphatase. Mediates dephosphorylation of NTRK1, NTRK2 and NTRK3. Plays a role in down-regulation of signaling cascades that lead to the activation of Akt and MAP kinases. Down-regulates TLR9-mediated activation of NF-kappa-B, as well as production of TNF, interferon alpha and interferon beta. This chain is Receptor-type tyrosine-protein phosphatase S (PTPRS), found in Gallus gallus (Chicken).